The following is a 325-amino-acid chain: uncharacterized protein (325 aa).

The helical transmembrane segment at 67–87 (WIPFFLLFSSVVVLGGLWWLG) threads the bilayer.

The protein resides in the membrane. This is an uncharacterized protein from Synechocystis sp. (strain ATCC 27184 / PCC 6803 / Kazusa).